A 195-amino-acid polypeptide reads, in one-letter code: Coiled-coil domain-containing protein 184 (195 aa).

A coiled-coil region spans residues 39–68 (GMKELMEHLKAQLQALFEDVRAMRGALDEQ). The tract at residues 98 to 175 (RQGGLGVVGN…AGLLGGDGPL (78 aa)) is disordered. A compositionally biased stretch (acidic residues) spans 135 to 146 (PEDEEDDDEEEK).

In Bos taurus (Bovine), this protein is Coiled-coil domain-containing protein 184 (CCDC184).